Here is a 470-residue protein sequence, read N- to C-terminus: Cysteine--tRNA ligase (470 aa).

C27 contributes to the Zn(2+) binding site. The 'HIGH' region signature appears at 29 to 39; that stretch reads PTVYNFFHIGN. Zn(2+) is bound by residues C211, H236, and E240. The 'KMSKS' region signature appears at 268–272; that stretch reads KMSKS. K271 serves as a coordination point for ATP.

It belongs to the class-I aminoacyl-tRNA synthetase family. As to quaternary structure, monomer. Zn(2+) serves as cofactor.

The protein resides in the cytoplasm. The enzyme catalyses tRNA(Cys) + L-cysteine + ATP = L-cysteinyl-tRNA(Cys) + AMP + diphosphate. The protein is Cysteine--tRNA ligase of Clostridium botulinum (strain Eklund 17B / Type B).